A 542-amino-acid polypeptide reads, in one-letter code: Cytochrome P450 monooxygenase TRI1 (542 aa).

A helical transmembrane segment spans residues 37-54 (LIYFLCFVVLGRAVQWFL). N-linked (GlcNAc...) asparagine glycans are attached at residues N167, N297, and N428. Residue C469 coordinates heme.

This sequence belongs to the cytochrome P450 family. Requires heme as cofactor.

Its subcellular location is the membrane. It participates in sesquiterpene biosynthesis; trichothecene biosynthesis. Its function is as follows. Cytochrome P450 monooxygenase; part of 2-gene cluster involved in trichothecene C-8 modification that mediates the biosynthesis of T2-toxin. The biosynthesis of trichothecenes begins with the cyclization of farnesyl diphosphate to trichodiene and is catalyzed by the trichodiene synthase TRI5. Trichodiene undergoes a series of oxygenations catalyzed by the cytochrome P450 monooxygenase TRI4. TRI4 controls the addition of four oxygens at C-2, C-3, C-11, and the C-12, C-13-epoxide to form the intermediate isotrichotriol. Isotrichotriol then undergoes a non-enzymatic isomerization and cyclization to form isotrichodermol. During this process, the oxygen at the C-2 position becomes the pyran ring oxygen and the hydroxyl group at C-11 is lost. More complex type A trichothecenes are built by modifying isotrichodermol through a series of paired hydroxylation and acetylation or acylation steps. Isotrichodermol is converted to isotrichodermin by the acetyltransferase TRI101. TRI101 encodes a C-3 transacetylase that acts as a self-protection or resistance factor during biosynthesis and that the presence of a free C-3 hydroxyl group is a key component of Fusarium trichothecene phytotoxicity. A second hydroxyl group is added to C-15 by the trichothecene C-15 hydroxylase TRI11, producing 15-decalonectrin, which is then acetylated by TRI3, producing calonectrin. A third hydroxyl group is added at C-4 by the cytochrome P450 monooxygenase TRI13, converting calonectrin to 3,15-diacetoxyspirpenol, which is subsequently acetylated by the acetyltransferase TRI7. A fourth hydroxyl group is added to C-8 by the cytochrome P450 monooxygenase TRI1, followed by the addition of an isovaleryl moiety by TRI16. Finally, the acetyl group is removed from the C-3 position by the trichothecene C-3 esterase TRI8 to produce T-2 toxin. In Fusarium sporotrichioides, this protein is Cytochrome P450 monooxygenase TRI1.